The sequence spans 526 residues: Anthranilate synthase component 1 (526 aa).

Residues Ser-40 and 304-306 each bind L-tryptophan; that span reads PYM. A chorismate-binding site is contributed by 341-342; sequence GT. Residue Glu-374 participates in Mg(2+) binding. Chorismate is bound by residues Tyr-461, Arg-481, 495-497, and Gly-497; that span reads GAG. Glu-510 contacts Mg(2+).

This sequence belongs to the anthranilate synthase component I family. Heterotetramer consisting of two non-identical subunits: a beta subunit (TrpG) and a large alpha subunit (TrpE). It depends on Mg(2+) as a cofactor.

It carries out the reaction chorismate + L-glutamine = anthranilate + pyruvate + L-glutamate + H(+). The protein operates within amino-acid biosynthesis; L-tryptophan biosynthesis; L-tryptophan from chorismate: step 1/5. Its activity is regulated as follows. Feedback inhibited by tryptophan. Part of a heterotetrameric complex that catalyzes the two-step biosynthesis of anthranilate, an intermediate in the biosynthesis of L-tryptophan. In the first step, the glutamine-binding beta subunit (TrpG) of anthranilate synthase (AS) provides the glutamine amidotransferase activity which generates ammonia as a substrate that, along with chorismate, is used in the second step, catalyzed by the large alpha subunit of AS (TrpE) to produce anthranilate. In the absence of TrpG, TrpE can synthesize anthranilate directly from chorismate and high concentrations of ammonia. The sequence is that of Anthranilate synthase component 1 (trpE) from Buchnera aphidicola subsp. Tetraneura caerulescens.